Reading from the N-terminus, the 98-residue chain is Small ribosomal subunit protein bS6 (98 aa).

Belongs to the bacterial ribosomal protein bS6 family.

In terms of biological role, binds together with bS18 to 16S ribosomal RNA. The chain is Small ribosomal subunit protein bS6 from Lactobacillus acidophilus (strain ATCC 700396 / NCK56 / N2 / NCFM).